The chain runs to 366 residues: Chorismate synthase (366 aa).

NADP(+) contacts are provided by Arg-48 and Arg-54. Residues 125 to 127, 238 to 239, Gly-278, 293 to 297, and Arg-319 contribute to the FMN site; these read RSS, NA, and KPTSS.

The protein belongs to the chorismate synthase family. Homotetramer. FMNH2 is required as a cofactor.

The enzyme catalyses 5-O-(1-carboxyvinyl)-3-phosphoshikimate = chorismate + phosphate. It functions in the pathway metabolic intermediate biosynthesis; chorismate biosynthesis; chorismate from D-erythrose 4-phosphate and phosphoenolpyruvate: step 7/7. Catalyzes the anti-1,4-elimination of the C-3 phosphate and the C-6 proR hydrogen from 5-enolpyruvylshikimate-3-phosphate (EPSP) to yield chorismate, which is the branch point compound that serves as the starting substrate for the three terminal pathways of aromatic amino acid biosynthesis. This reaction introduces a second double bond into the aromatic ring system. This is Chorismate synthase from Herminiimonas arsenicoxydans.